We begin with the raw amino-acid sequence, 360 residues long: MAGNSIGQLFRVTTFGESHGIALGCIVDGMPPGLALSEDDIQPDLDRRKPGTSKYTTPRREEDKVQILSGVFDGKTTGTSIGMIIKNTDQRSQDYGEIKDRFRPGHADFTYQQKYGLRDYRGGGRSSARETVMRVAAGAIAKKYLREYFGIEVRGYLSQIGEIKIDPQVVADVSKIDWAKVNSNPFFCPDESAVEKFDELIRELKKAGNSIGAKLTIVAEHVPVGLGEPVFDRLDADLAHALMGINAVKAVEIGDGFAVVEQKGTEHRDEMTPEGFCSNHAGGILGGISSGQPIIATIALKPTSSITVVGRSVNLNNEPVDVITKGRHDPCVGIRAVPIAEAMMAIVLLDHLLRFKAQCK.

The interval 36–60 (LSEDDIQPDLDRRKPGTSKYTTPRR) is disordered. R48 is a binding site for NADP(+). Residues 125 to 127 (RSS), 246 to 247 (NA), G286, 301 to 305 (KPTSS), and R327 each bind FMN.

Belongs to the chorismate synthase family. In terms of assembly, homotetramer. Requires FMNH2 as cofactor.

The catalysed reaction is 5-O-(1-carboxyvinyl)-3-phosphoshikimate = chorismate + phosphate. Its pathway is metabolic intermediate biosynthesis; chorismate biosynthesis; chorismate from D-erythrose 4-phosphate and phosphoenolpyruvate: step 7/7. Functionally, catalyzes the anti-1,4-elimination of the C-3 phosphate and the C-6 proR hydrogen from 5-enolpyruvylshikimate-3-phosphate (EPSP) to yield chorismate, which is the branch point compound that serves as the starting substrate for the three terminal pathways of aromatic amino acid biosynthesis. This reaction introduces a second double bond into the aromatic ring system. This chain is Chorismate synthase, found in Histophilus somni (strain 129Pt) (Haemophilus somnus).